The chain runs to 461 residues: Cysteine--tRNA ligase (461 aa).

Cys28 contacts Zn(2+). The short motif at 30-40 is the 'HIGH' region element; it reads ITVYDLCHIGH. Zn(2+) is bound by residues Cys209, His234, and Glu238. A 'KMSKS' region motif is present at residues 266-270; sequence KMSKS. ATP is bound at residue Lys269.

The protein belongs to the class-I aminoacyl-tRNA synthetase family. As to quaternary structure, monomer. It depends on Zn(2+) as a cofactor.

The protein resides in the cytoplasm. It catalyses the reaction tRNA(Cys) + L-cysteine + ATP = L-cysteinyl-tRNA(Cys) + AMP + diphosphate. The chain is Cysteine--tRNA ligase from Klebsiella pneumoniae (strain 342).